We begin with the raw amino-acid sequence, 225 residues long: UPF0758 protein Bpet3149 (225 aa).

The MPN domain occupies 103-225 (AMSEPGSVKR…VVSMAELGLL (123 aa)). Zn(2+) contacts are provided by His174, His176, and Asp187. Residues 174 to 187 (HNHPSGSAQPSQAD) carry the JAMM motif motif.

The protein belongs to the UPF0758 family.

The protein is UPF0758 protein Bpet3149 of Bordetella petrii (strain ATCC BAA-461 / DSM 12804 / CCUG 43448).